We begin with the raw amino-acid sequence, 88 residues long: Small ribosomal subunit protein uS15 (88 aa).

This sequence belongs to the universal ribosomal protein uS15 family. In terms of assembly, part of the 30S ribosomal subunit. Forms a bridge to the 50S subunit in the 70S ribosome, contacting the 23S rRNA.

Functionally, one of the primary rRNA binding proteins, it binds directly to 16S rRNA where it helps nucleate assembly of the platform of the 30S subunit by binding and bridging several RNA helices of the 16S rRNA. In terms of biological role, forms an intersubunit bridge (bridge B4) with the 23S rRNA of the 50S subunit in the ribosome. The sequence is that of Small ribosomal subunit protein uS15 from Mesomycoplasma flocculare (Mycoplasma flocculare).